The following is a 487-amino-acid chain: MTTHYIAGNWQAGQGETLQSLNPVTQAVVWQGQGAVASQVDAAVQAARQAFPAWAQLSLEARIDVLEKFAAQLKVHAEAMAQCIGEETGKPLWESATEVTSMINKVAISVQSYRERTGEKSGPLADATAVLRHKPHGVVAVFGPYNFPGHLPNGHIVPALLAGNCVVFKPSELTPKVAELTVNCWIAAGLPAGVLNLVQGARETGVALAANPGIDGLFFTGSSRTGNLLHQQFAGRPDKILALEMGGNNPLVVDEVKDLDAAVYTIIQSAFISAGQRCTCARRLLVPQGSWGDALIARLVDVCKTITVGAFDEQPAPFMGSVISLQAARALIAAQAELAAKGGVKLLEMTQPQADAALLTPGIIDVTAVDERPDEEFFGPLLQVIRYVDFDAAIDEANNTQYGLAAGLLSDSRARYQYFWLRSRAGIVNWNKQLTGAASSAPFGGVGASGNHRASAYYAADYCAYPVASLETASLALPATLTPGVTL.

Residue 221-226 (GSSRTG) coordinates NAD(+). Catalysis depends on residues E244 and C278.

The protein belongs to the aldehyde dehydrogenase family. AstD subfamily.

The enzyme catalyses N-succinyl-L-glutamate 5-semialdehyde + NAD(+) + H2O = N-succinyl-L-glutamate + NADH + 2 H(+). The protein operates within amino-acid degradation; L-arginine degradation via AST pathway; L-glutamate and succinate from L-arginine: step 4/5. Its function is as follows. Catalyzes the NAD-dependent reduction of succinylglutamate semialdehyde into succinylglutamate. The chain is N-succinylglutamate 5-semialdehyde dehydrogenase from Pseudomonas putida (strain GB-1).